The following is a 316-amino-acid chain: Coproporphyrin III ferrochelatase (316 aa).

Fe-coproporphyrin III-binding positions include Y13, R30, 46–47 (RY), S54, and Y125. Positions 183 and 264 each coordinate Fe(2+).

Belongs to the ferrochelatase family.

It is found in the cytoplasm. It carries out the reaction Fe-coproporphyrin III + 2 H(+) = coproporphyrin III + Fe(2+). It functions in the pathway porphyrin-containing compound metabolism; protoheme biosynthesis. Functionally, involved in coproporphyrin-dependent heme b biosynthesis. Catalyzes the insertion of ferrous iron into coproporphyrin III to form Fe-coproporphyrin III. This Geobacillus kaustophilus (strain HTA426) protein is Coproporphyrin III ferrochelatase.